The primary structure comprises 348 residues: Protein RecA (348 aa).

64 to 71 contributes to the ATP binding site; it reads GPESSGKT. A compositionally biased stretch (basic and acidic residues) spans 325–335; it reads YEIDGASKEPL. Positions 325-348 are disordered; sequence YEIDGASKEPLEETEETLSLLDDE. Residues 336–348 show a composition bias toward acidic residues; it reads EETEETLSLLDDE.

Belongs to the RecA family.

The protein resides in the cytoplasm. Functionally, can catalyze the hydrolysis of ATP in the presence of single-stranded DNA, the ATP-dependent uptake of single-stranded DNA by duplex DNA, and the ATP-dependent hybridization of homologous single-stranded DNAs. It interacts with LexA causing its activation and leading to its autocatalytic cleavage. This chain is Protein RecA, found in Listeria seeligeri.